Here is a 103-residue protein sequence, read N- to C-terminus: Large ribosomal subunit protein bL21 (103 aa).

Belongs to the bacterial ribosomal protein bL21 family. In terms of assembly, part of the 50S ribosomal subunit. Contacts protein L20.

This protein binds to 23S rRNA in the presence of protein L20. This is Large ribosomal subunit protein bL21 from Haemophilus influenzae (strain ATCC 51907 / DSM 11121 / KW20 / Rd).